The primary structure comprises 246 residues: Putative L,D-transpeptidase YafK (246 aa).

The first 19 residues, 1-19, serve as a signal peptide directing secretion; that stretch reads MRKIALILAMLLIPCVSFA. One can recognise a L,D-TPase catalytic domain in the interval 44-174; it reads VYIQIFKEER…GQPSVQVSIY (131 aa). Histidine 135 functions as the Proton donor/acceptor in the catalytic mechanism. Cysteine 143 functions as the Nucleophile in the catalytic mechanism.

This sequence belongs to the YkuD family.

Its pathway is cell wall biogenesis; peptidoglycan biosynthesis. The sequence is that of Putative L,D-transpeptidase YafK (yafK) from Escherichia coli O157:H7.